We begin with the raw amino-acid sequence, 315 residues long: Ribosomal protein L11 methyltransferase (315 aa).

S-adenosyl-L-methionine-binding residues include T164, G185, D207, and N249.

The protein belongs to the methyltransferase superfamily. PrmA family.

It localises to the cytoplasm. The catalysed reaction is L-lysyl-[protein] + 3 S-adenosyl-L-methionine = N(6),N(6),N(6)-trimethyl-L-lysyl-[protein] + 3 S-adenosyl-L-homocysteine + 3 H(+). Its function is as follows. Methylates ribosomal protein L11. The sequence is that of Ribosomal protein L11 methyltransferase from Lactobacillus johnsonii (strain CNCM I-12250 / La1 / NCC 533).